The primary structure comprises 249 residues: Protein twisted gastrulation (249 aa).

A signal peptide spans 1-23 (MQLLCYFVILFVGIAPWSSLAND). A glycan (N-linked (GlcNAc...) asparagine) is linked at Asn199.

This sequence belongs to the twisted gastrulation protein family. As to quaternary structure, component of a complex composed of dpp, sog and tsg. As to expression, first appears in stage 4 embryos, expressed in two domains: a broad mid-dorsal saddle and an anterior cap, expression between the domains is continuous across the dorsal midline. At stage 5, expression is refined into 4 graded stripes in the mid-dorsal region and a paired domain in the anterior region. During stages 7 and 8, anterior expression fades and the mid dorsal stripes are located between the anterior and posterior transverse furrow (ATF and PTF). Expressing cells become incorporated into the deepening PTF.

Its subcellular location is the secreted. In terms of biological role, involved in dorsal-ventral patterning. Required for specification of a narrow strip of dorsal midline cells that will give rise to the amnioserosa, but not for specification of dorsal ectoderm cells. Inhibits BMP signaling; enhances the binding of sog to dpp, thus enhancing the antagonistic activity of sog. This chain is Protein twisted gastrulation (tsg), found in Drosophila melanogaster (Fruit fly).